A 260-amino-acid polypeptide reads, in one-letter code: Thiazole synthase (260 aa).

K96 acts as the Schiff-base intermediate with DXP in catalysis. Residues G157, 184-185 (AG), and 206-207 (NT) contribute to the 1-deoxy-D-xylulose 5-phosphate site.

This sequence belongs to the ThiG family. As to quaternary structure, homotetramer. Forms heterodimers with either ThiH or ThiS.

It is found in the cytoplasm. The enzyme catalyses [ThiS sulfur-carrier protein]-C-terminal-Gly-aminoethanethioate + 2-iminoacetate + 1-deoxy-D-xylulose 5-phosphate = [ThiS sulfur-carrier protein]-C-terminal Gly-Gly + 2-[(2R,5Z)-2-carboxy-4-methylthiazol-5(2H)-ylidene]ethyl phosphate + 2 H2O + H(+). Its pathway is cofactor biosynthesis; thiamine diphosphate biosynthesis. Functionally, catalyzes the rearrangement of 1-deoxy-D-xylulose 5-phosphate (DXP) to produce the thiazole phosphate moiety of thiamine. Sulfur is provided by the thiocarboxylate moiety of the carrier protein ThiS. In vitro, sulfur can be provided by H(2)S. This Rhodopseudomonas palustris (strain TIE-1) protein is Thiazole synthase.